A 222-amino-acid chain; its full sequence is Nudix hydrolase 11 (222 aa).

In terms of domain architecture, Nudix hydrolase spans alanine 31 to phenylalanine 175. The short motif at glycine 73–glycine 96 is the Nudix box element. Glutamate 90 and glutamate 94 together coordinate Mg(2+). A helical membrane pass occupies residues phenylalanine 186–tyrosine 204.

The protein belongs to the Nudix hydrolase family. PCD1 subfamily. Requires Mn(2+) as cofactor. The cofactor is Mg(2+). Expressed in roots, stems and leaves.

Its subcellular location is the peroxisome membrane. In terms of biological role, coenzyme A diphosphatase which mediates the cleavage of CoA into 3',5'-ADP from CoA and 4'-phosphopantetheine. Can use malonyl-CoA, hexanoyl-CoA, lauroyl-CoA, myristoyl-CoA and palmitoyl-CoA as substrates, but not isobutyryl-CoA or propionyl-CoA. This Arabidopsis thaliana (Mouse-ear cress) protein is Nudix hydrolase 11 (NUDT11).